Consider the following 30-residue polypeptide: Cyclotide hyen-C (30 aa).

The cyclopeptide (Gly-Asn) cross-link spans 1–30; it reads GTHPCQETCVTSTRCSTQGCHCNWPICFKN. 3 disulfide bridges follow: Cys5–Cys20, Cys9–Cys22, and Cys15–Cys27.

This is a cyclic peptide. In terms of tissue distribution, detected in stems (at protein level).

Its function is as follows. Probably participates in a plant defense mechanism. Does not display any cytotoxic activity towards K562, HeLa, MCF-7, HUVEC or red blood cells. Does not bind to phospholipd membranes containing 1-palmitoyl 2-oleoyl phosphatidylcholine (POPC) or 1-palmitoyl-2-oleophosphatidylethanolamine (POPE). This is Cyclotide hyen-C from Pigea enneasperma (Spade flower).